Here is a 229-residue protein sequence, read N- to C-terminus: Tubulin-specific chaperone B (229 aa).

In terms of domain architecture, CAP-Gly spans 170 to 212; that stretch reads GATKFKEGVWVGVKYDEPVGKNDGSVAGVRYFDCDPKYGGFVR.

Belongs to the TBCB family. Supercomplex made of cofactors A to E. Cofactors A and D function by capturing and stabilizing tubulin in a quasi-native conformation. Cofactor E binds to the cofactor D-tubulin complex; interaction with cofactor C then causes the release of tubulin polypeptides that are committed to the native state.

Its subcellular location is the cytoplasm. It is found in the cytoskeleton. Functionally, binds to alpha-tubulin folding intermediates after their interaction with cytosolic chaperonin in the pathway leading from newly synthesized tubulin to properly folded heterodimer. The chain is Tubulin-specific chaperone B from Caenorhabditis elegans.